Consider the following 233-residue polypeptide: Ribose-5-phosphate isomerase A (233 aa).

Substrate contacts are provided by residues 31 to 34 (SGST), 87 to 90 (DGAD), and 100 to 103 (KGGG). The active-site Proton acceptor is E109. Position 127 (K127) interacts with substrate.

This sequence belongs to the ribose 5-phosphate isomerase family. In terms of assembly, homodimer.

The enzyme catalyses aldehydo-D-ribose 5-phosphate = D-ribulose 5-phosphate. It participates in carbohydrate degradation; pentose phosphate pathway; D-ribose 5-phosphate from D-ribulose 5-phosphate (non-oxidative stage): step 1/1. Its function is as follows. Catalyzes the reversible conversion of ribose-5-phosphate to ribulose 5-phosphate. This chain is Ribose-5-phosphate isomerase A, found in Chlamydia felis (strain Fe/C-56) (Chlamydophila felis).